Reading from the N-terminus, the 364-residue chain is Aminomethyltransferase (364 aa).

Belongs to the GcvT family. The glycine cleavage system is composed of four proteins: P, T, L and H.

The enzyme catalyses N(6)-[(R)-S(8)-aminomethyldihydrolipoyl]-L-lysyl-[protein] + (6S)-5,6,7,8-tetrahydrofolate = N(6)-[(R)-dihydrolipoyl]-L-lysyl-[protein] + (6R)-5,10-methylene-5,6,7,8-tetrahydrofolate + NH4(+). In terms of biological role, the glycine cleavage system catalyzes the degradation of glycine. The chain is Aminomethyltransferase from Shigella sonnei (strain Ss046).